Consider the following 1715-residue polypeptide: Rho guanine nucleotide exchange factor TIAM2 (1715 aa).

2 stretches are compositionally biased toward polar residues: residues M1 to G22 and G218 to D229. Disordered stretches follow at residues M1–P27, F174–S249, S263–S294, and T385–G418. A lipid anchor (N-myristoyl glycine) is attached at G2. A compositionally biased stretch (low complexity) spans S235–S245. A compositionally biased stretch (basic and acidic residues) spans L395 to S411. Residues V504–A618 enclose the PH 1 domain. Residues P665–M692 adopt a coiled-coil conformation. An RBD domain is found at V831 to I902. The region spanning D911–T997 is the PDZ domain. A disordered region spans residues T1092–R1113. The 195-residue stretch at R1120–M1314 folds into the DH domain. The 132-residue stretch at L1347–N1478 folds into the PH 2 domain. The disordered stretch occupies residues S1515–L1582. Low complexity predominate over residues S1522 to S1532. Polar residues predominate over residues K1533–G1552. The span at E1557–Q1572 shows a compositional bias: basic and acidic residues. Phosphoserine is present on S1604. T1662 carries the phosphothreonine modification.

This sequence belongs to the TIAM family. As to quaternary structure, interacts with MAP1A, MAP1B, PARP1 and YWHAE. Interacts with CD44, PARD3 and MAPK8IP2. Post-translationally, phosphorylated on serine and threonine residues. Phosphorylated on Thr-1662 by Rho-kinase. Its phosphorylation by Rho-kinase inhibits its guanine nucleotide exchange activity, its interaction with MAP1A, MAP1B, PARP1 and YWHAE and reduces its ability to promote neurite growth. As to expression, expressed in fetal brain (at protein level). Expressed in the olfactory bulb, cortical plate of the cerebral cortex, caudate putamen, hippocampus, ependymal cells of the lateral surface of the lateral ventricles of the brain. Weakly expressed in heart, lung, liver, skeletal muscle, kidney and testis.

The protein localises to the cytoplasm. It localises to the cell projection. It is found in the lamellipodium. Its subcellular location is the filopodium. The protein resides in the growth cone. The protein localises to the neuron projection. It localises to the perikaryon. Modulates the activity of RHO-like proteins and connects extracellular signals to cytoskeletal activities. Acts as a GDP-dissociation stimulator protein that stimulates the GDP-GTP exchange activity of RHO-like GTPases and activates them. Activates specifically RAC1, but not CDC42 and RHOA. Mediates extracellular laminin signals to activate Rac1, contributing to neurite growth. Involved in lamellipodial formation and advancement of the growth cone of embryonic hippocampal neurons. Promotes migration of neurons in the cerebral cortex. When overexpressed, induces membrane ruffling accompanied by the accumulation of actin filaments along the altered plasma membrane. This Mus musculus (Mouse) protein is Rho guanine nucleotide exchange factor TIAM2.